We begin with the raw amino-acid sequence, 113 residues long: Mitochondrial import inner membrane translocase subunit tim16 (113 aa).

Residues 56–108 (KILGLENVETVSKEDIDKKYNELLTINDPKDGGSEYLQIKISGAKHCLHSALK) form a J-like region.

Belongs to the TIM16/PAM16 family. Probable component of the PAM complex at least composed of a mitochondrial HSP70 protein, grepE, tim16 and tim14. Associates with the TIM23 complex.

Its subcellular location is the mitochondrion inner membrane. Functionally, regulates ATP-dependent protein translocation into the mitochondrial matrix. The sequence is that of Mitochondrial import inner membrane translocase subunit tim16 (timm16) from Dictyostelium discoideum (Social amoeba).